Reading from the N-terminus, the 417-residue chain is Blood group Rh(D) polypeptide (417 aa).

11 helical membrane passes run 12-32 (CLPL…YFFT), 44-64 (LVAS…GLGF), 77-97 (VAFN…LDGF), 107-127 (VITL…LISV), 130-150 (VLGK…VTAL), 167-187 (MNMM…AWCL), 203-223 (TIPS…WPSF), 238-258 (VFNT…GSSL), 287-307 (LIPS…ISVG), 334-354 (LLGL…TVGA), and 358-378 (MIGF…VIAL).

It belongs to the ammonium transporter (TC 2.A.49) family. Rh subfamily. In terms of processing, palmitoylated. In terms of tissue distribution, restricted to tissues or cell lines expressing erythroid characters.

Its subcellular location is the cell membrane. Functionally, may be part of an oligomeric complex which is likely to have a transport or channel function in the erythrocyte membrane. This chain is Blood group Rh(D) polypeptide (RHD), found in Homo sapiens (Human).